A 441-amino-acid polypeptide reads, in one-letter code: Homogentisate 1,2-dioxygenase (441 aa).

Residue His287 is the Proton acceptor of the active site. 2 residues coordinate Fe cation: His330 and Glu336. Homogentisate contacts are provided by Tyr345 and His366. His366 contributes to the Fe cation binding site.

It belongs to the homogentisate dioxygenase family. As to quaternary structure, hexamer; dimer of trimers. Requires Fe cation as cofactor.

It carries out the reaction homogentisate + O2 = 4-maleylacetoacetate + H(+). It functions in the pathway amino-acid degradation; L-phenylalanine degradation; acetoacetate and fumarate from L-phenylalanine: step 4/6. In terms of biological role, involved in the catabolism of homogentisate (2,5-dihydroxyphenylacetate or 2,5-OH-PhAc), a central intermediate in the degradation of phenylalanine and tyrosine. Catalyzes the oxidative ring cleavage of the aromatic ring of homogentisate to yield maleylacetoacetate. This chain is Homogentisate 1,2-dioxygenase, found in Xanthomonas oryzae pv. oryzae (strain KACC10331 / KXO85).